A 449-amino-acid polypeptide reads, in one-letter code: 3-phosphoshikimate 1-carboxyvinyltransferase (449 aa).

3-phosphoshikimate contacts are provided by lysine 28, serine 29, and arginine 33. Residue lysine 28 coordinates phosphoenolpyruvate. The phosphoenolpyruvate site is built by glycine 105 and arginine 133. The 3-phosphoshikimate site is built by serine 179, glutamine 181, aspartate 332, and lysine 359. Glutamine 181 contributes to the phosphoenolpyruvate binding site. Aspartate 332 serves as the catalytic Proton acceptor. Residues arginine 363 and arginine 406 each coordinate phosphoenolpyruvate.

This sequence belongs to the EPSP synthase family. Monomer.

It localises to the cytoplasm. It catalyses the reaction 3-phosphoshikimate + phosphoenolpyruvate = 5-O-(1-carboxyvinyl)-3-phosphoshikimate + phosphate. The protein operates within metabolic intermediate biosynthesis; chorismate biosynthesis; chorismate from D-erythrose 4-phosphate and phosphoenolpyruvate: step 6/7. Functionally, catalyzes the transfer of the enolpyruvyl moiety of phosphoenolpyruvate (PEP) to the 5-hydroxyl of shikimate-3-phosphate (S3P) to produce enolpyruvyl shikimate-3-phosphate and inorganic phosphate. The sequence is that of 3-phosphoshikimate 1-carboxyvinyltransferase from Nitrobacter winogradskyi (strain ATCC 25391 / DSM 10237 / CIP 104748 / NCIMB 11846 / Nb-255).